A 132-amino-acid polypeptide reads, in one-letter code: SH2 domain-containing protein 1B (132 aa).

One can recognise an SH2 domain in the interval 5–101 (YYHGRLTKQD…GMVVHLLKPI (97 aa)). Tyrosine 127 carries the post-translational modification Phosphotyrosine.

Binds to the phosphorylated receptors CD84, SLAMF1, LY9 and CD244. Does not bind to non-phosphorylated SLAMF1. Interacts with SLAMF7 (via ITSM phosphorylated on 'Tyr-304'). Interacts with Src kinases HCK, LYN, FYN, FGR and LCK (via kinase domains). Interacts (phosphorylated at Tyr-127) with PLCG1.

In terms of biological role, cytoplasmic adapter regulating receptors of the signaling lymphocytic activation molecule (SLAM) family such as CD84, SLAMF1, LY9 and CD244. In SLAM signaling seems to cooperate with SH2D1A/SAP. Plays a role in regulation of effector functions of natural killer (NK) cells by controlling signal transduction through CD244/2B4 without effecting its tyrosine phosphorylation; downstream signaling involves PLCG1 and ERK activation. Activation of SLAMF7-mediated NK cell function does not effect receptor tyrosine phosphorylation but distal signaling. In the context of NK cell-mediated cytotoxicity does not enhance conjugate formation with target cells but stimulates polarization of the microtubule-organizing center and cytotoxic granules toward the NK cell synapse. Negatively regulates CD40-induced cytokine production in dendritic cells downstream of SLAM family receptors probably by inducing activation of the PI3K pathway to inhibit p38 MAPK and JNK activation. This Homo sapiens (Human) protein is SH2 domain-containing protein 1B (SH2D1B).